The primary structure comprises 523 residues: 3-hydroxybenzoate--CoA ligase (523 aa).

It belongs to the ATP-dependent AMP-binding enzyme family. Benzoate-CoA ligase subfamily.

The enzyme catalyses 3-hydroxybenzoate + ATP + CoA = 3-hydroxybenzoyl-CoA + AMP + diphosphate. It catalyses the reaction 4-hydroxybenzoate + ATP + CoA = 4-hydroxybenzoyl-CoA + AMP + diphosphate. Its function is as follows. Ligase involved in the anaerobic degradation of 3-hydroxybenzoate (3OHBz). Catalyzes the activation of 3-hydroxybenzoate to 3-hydroxybenzoyl-CoA. Also shows high activity with protocatechuate and 4-hydroxybenzoate. Exhibits lower activity with benzoate, but cannot use 2-hydroxybenzoate or benzoate analogs containing other substituents at the ortho position, such as 2-aminobenzoate (anthranilate). The sequence is that of 3-hydroxybenzoate--CoA ligase from Aromatoleum sp. (strain CIB) (Azoarcus sp. (strain CIB)).